The primary structure comprises 189 residues: UPF0301 protein PFL_5830 (189 aa).

Belongs to the UPF0301 (AlgH) family.

The sequence is that of UPF0301 protein PFL_5830 from Pseudomonas fluorescens (strain ATCC BAA-477 / NRRL B-23932 / Pf-5).